The primary structure comprises 374 residues: tRNA-specific 2-thiouridylase MnmA (374 aa).

ATP contacts are provided by residues 12 to 19 (GMSGGVDS) and Met38. An interaction with target base in tRNA region spans residues 98 to 100 (NPD). Cys103 (nucleophile) is an active-site residue. Cysteines 103 and 207 form a disulfide. Gly128 contacts ATP. Residues 157 to 159 (KDQ) form an interaction with tRNA region. Cys207 (cysteine persulfide intermediate) is an active-site residue. Residues 321-322 (RY) are interaction with tRNA.

Belongs to the MnmA/TRMU family.

It is found in the cytoplasm. It catalyses the reaction S-sulfanyl-L-cysteinyl-[protein] + uridine(34) in tRNA + AH2 + ATP = 2-thiouridine(34) in tRNA + L-cysteinyl-[protein] + A + AMP + diphosphate + H(+). Catalyzes the 2-thiolation of uridine at the wobble position (U34) of tRNA, leading to the formation of s(2)U34. In Aliivibrio fischeri (strain ATCC 700601 / ES114) (Vibrio fischeri), this protein is tRNA-specific 2-thiouridylase MnmA.